The chain runs to 311 residues: Succinate dehydrogenase [ubiquinone] iron-sulfur subunit 2, mitochondrial (311 aa).

The transit peptide at 1–63 (MILRRTLPRL…EEIRDHRRGD (63 aa)) directs the protein to the mitochondrion. Residues 1–70 (MILRRTLPRL…RGDAAAASPA (70 aa)) form a disordered region. Over residues 51-63 (AKEEEIRDHRRGD) the composition is skewed to basic and acidic residues. Positions 77-168 (FRVYRWSPDA…ATTVTPLPHM (92 aa)) constitute a 2Fe-2S ferredoxin-type domain. Residues Cys-128, Cys-133, and Cys-148 each coordinate [2Fe-2S] cluster. Residues 211–241 (ERKRLDGLYECILCACCSAACPSYWWNAEAF) enclose the 4Fe-4S ferredoxin-type domain. [4Fe-4S] cluster-binding residues include Cys-221, Cys-224, and Cys-227. Residue Cys-231 participates in [3Fe-4S] cluster binding. Position 236 (Trp-236) interacts with a ubiquinone. [3Fe-4S] cluster is bound by residues Cys-279 and Cys-285. [4Fe-4S] cluster is bound at residue Cys-289.

It belongs to the succinate dehydrogenase/fumarate reductase iron-sulfur protein family. As to quaternary structure, component of complex II composed of eight subunits in plants: four classical SDH subunits SDH1, SDH2, SDH3 and SDH4 (a flavoprotein (FP), an iron-sulfur protein (IP), and a cytochrome b composed of a large and a small subunit.), as well as four subunits unknown in mitochondria from bacteria and heterotrophic eukaryotes. [2Fe-2S] cluster is required as a cofactor. The cofactor is [3Fe-4S] cluster. Requires [4Fe-4S] cluster as cofactor.

The protein resides in the mitochondrion inner membrane. It catalyses the reaction a quinone + succinate = fumarate + a quinol. Its pathway is carbohydrate metabolism; tricarboxylic acid cycle; fumarate from succinate (eukaryal route): step 1/1. Its function is as follows. Iron-sulfur protein (IP) subunit of succinate dehydrogenase (SDH) that is involved in complex II of the mitochondrial electron transport chain and is responsible for transferring electrons from succinate to ubiquinone (coenzyme Q). The chain is Succinate dehydrogenase [ubiquinone] iron-sulfur subunit 2, mitochondrial from Oryza sativa subsp. japonica (Rice).